The chain runs to 306 residues: D-alanine--D-alanine ligase B (306 aa).

Residues 101–303 (KLLWQGAGLP…FSQLVVRILE (203 aa)) form the ATP-grasp domain. 134-189 (ISALGLPLIVKPSREGSSVGMTKVVEENALQGALSLAFQHDDEILIEKWLCGPEFT) serves as a coordination point for ATP. 3 residues coordinate Mg(2+): Asp-257, Glu-270, and Asn-272.

Belongs to the D-alanine--D-alanine ligase family. In terms of assembly, monomer. Requires Mg(2+) as cofactor. Mn(2+) serves as cofactor.

It is found in the cytoplasm. The catalysed reaction is 2 D-alanine + ATP = D-alanyl-D-alanine + ADP + phosphate + H(+). It functions in the pathway cell wall biogenesis; peptidoglycan biosynthesis. In terms of biological role, cell wall formation. The sequence is that of D-alanine--D-alanine ligase B (ddlB) from Salmonella typhimurium (strain LT2 / SGSC1412 / ATCC 700720).